The chain runs to 443 residues: FAD-dependent monooxygenase orf3 (443 aa).

The chain crosses the membrane as a helical span at residues S5 to L25. E35 and G48 together coordinate FAD. Residues N75 and N87 are each glycosylated (N-linked (GlcNAc...) asparagine). An FAD-binding site is contributed by R116. R199 is an active-site residue. 2 residues coordinate FAD: D315 and A328.

Belongs to the paxM FAD-dependent monooxygenase family. The cofactor is FAD.

It localises to the membrane. It functions in the pathway secondary metabolite biosynthesis. FAD-dependent monooxygenase; part of the gene cluster that mediates the biosynthesis of nigerpyrone and its derivatives carbonarone A and pestalamide A. The biosynthesis pathway begins with the polyketide assembly by epaA to form phenylacetyl triketide precursor from successive condensation of two malonyl-CoA, presumably with one phenylacetyl-CoA starter unit produced by the phenylacetyl-CoA ligase epaB. For the nigerpyrone biosynthesis, the reactive polyketide chain is released as an aldehyde through the R-domain. A nonenzymatic cyclization and dehydration may create nigerpyrone. For the biosynthesis of carbonarone A and pestalamide A, an extra methyl group is added through the C-methyltransferase domain. Several further steps involving the dehydrogenase orf1, the cytochrome P450 monooxygenase orf2 and the FAD-dependent monooxygenase orf3 are required to form a carbonarone A precursor which is converted to carbonarone A via cyclization. The O-acetyltransferase epaC could catalyze the transfer of 2-methylsuccinyl-CoA, a common intermediate in the ethylmalonyl-CoA pathway, to generate the final product pestalamide A. The chain is FAD-dependent monooxygenase orf3 from Aspergillus niger (strain ATCC MYA-4892 / CBS 513.88 / FGSC A1513).